Here is a 388-residue protein sequence, read N- to C-terminus: Chorismate synthase (388 aa).

Residues Arg39 and Arg45 each coordinate NADP(+). Residues 132-134 (RSS), 251-252 (NA), Gly296, 311-315 (KPIPT), and Arg337 contribute to the FMN site.

The protein belongs to the chorismate synthase family. In terms of assembly, homotetramer. It depends on FMNH2 as a cofactor.

The enzyme catalyses 5-O-(1-carboxyvinyl)-3-phosphoshikimate = chorismate + phosphate. Its pathway is metabolic intermediate biosynthesis; chorismate biosynthesis; chorismate from D-erythrose 4-phosphate and phosphoenolpyruvate: step 7/7. Catalyzes the anti-1,4-elimination of the C-3 phosphate and the C-6 proR hydrogen from 5-enolpyruvylshikimate-3-phosphate (EPSP) to yield chorismate, which is the branch point compound that serves as the starting substrate for the three terminal pathways of aromatic amino acid biosynthesis. This reaction introduces a second double bond into the aromatic ring system. This is Chorismate synthase from Staphylococcus haemolyticus (strain JCSC1435).